A 478-amino-acid polypeptide reads, in one-letter code: MSTNGDDHQVKDSLEQLRCHFTWELSIDDDEMPDLENRVLDQIEFLDTKYSVGIHNLLAYVKHLKGQNEEALKSLKEAENLMQEEHDNQANVRSLVTWGNFAWMYYHMGRLAEAQTYLDKVENICKKLSNPFRYRMECPEIDCEEGWALLKCGGKNYERAKACFEKVLEVDPENPESSAGYAISAYRLDGFKLATKNHKPFSLLPLRQAVRLNPDNGYIKVLLALKLQDEGQEAEGEKYIEEALANMSSQTYVFRYAAKFYRRKGSVDKALELLKKALQETPTSVLLHHQIGLCYKAQMIQIKEATKGQPRGQNREKLDKMIRSAIFHFESAVEKKPTFEVAHLDLARMYIEAGNHRKAEENFQKLLCMKPVVEETMQDIHFHYGRFQEFQKKSDVNAIIHYLKAIKIEQASLTRDKSINSLKKLVLRKLRRKALDLESLSLLGFVYKLEGNMNEALEYYERALRLAADFENSVRQGP.

TPR repeat units follow at residues 52-85 (VGIH…MQEE), 95-128 (LVTW…CKKL), 141-174 (IDCE…DPEN), 183-216 (ISAY…NPDN), 218-249 (YIKV…NMSS), and 251-284 (TYVF…TPTS). Residue tryptophan 147 coordinates mRNA. Glycine 190 is an RNA binding site. 4 residues coordinate RNA: lysine 259, histidine 289, glutamine 290, and lysine 336. TPR repeat units follow at residues 305 to 339 (ATKG…KPTF), 340 to 373 (EVAH…KPVV), 378 to 412 (QDIH…EQAS), and 437 to 470 (LESL…AADF).

It belongs to the IFIT family. In terms of assembly, component of an interferon-dependent multiprotein complex, at least composed of IFIT1, IFIT2 and IFIT3. Interacts (via TPR repeats 1-4) with RPL15. Interacts with STING1/MITA; could disrupt STING1 interaction with MAVS or TBK1, acting as a negative-feedback regulator of virus-triggered signaling. Interacts with EIF3E; this could be an alternative way to inhibit translation. Phosphorylated. In terms of processing, ISGylated.

The protein localises to the cytoplasm. Plays a key role in the innate immune response as part of an interferon-dependent multiprotein complex, recognizing and sequestering viral RNAs that lack host-specific 2'-O-methylation at their 5' cap. By distinguishing these RNAs from host mRNAs, inhibits their translation by competing with the translation initiation factor eIF4E. Could also prevent viral replication through its interaction with DNA replication origin-binding protein E1 of several viruses. Causes the translocation of E1 from the nucleus to the cytoplasm and can also inhibit its helicase activity in vitro. Exhibits antiviral activity against many viruses from the Flaviviridae (West Nile virus, Dengue virus, hepatitis C virus), Coronaviridae (human 229E coronavirus, SARS-CoV-2 and SARS-CoV), Poxviridae (vaccinia virus) and Togaviridae (Sindbis virus) families. The sequence is that of Antiviral innate immune response effector IFIT1 from Homo sapiens (Human).